The chain runs to 299 residues: Bifunctional protein FolD (299 aa).

NADP(+)-binding positions include 168–170, S193, and I234; that span reads GRS.

This sequence belongs to the tetrahydrofolate dehydrogenase/cyclohydrolase family. Homodimer.

The enzyme catalyses (6R)-5,10-methylene-5,6,7,8-tetrahydrofolate + NADP(+) = (6R)-5,10-methenyltetrahydrofolate + NADPH. The catalysed reaction is (6R)-5,10-methenyltetrahydrofolate + H2O = (6R)-10-formyltetrahydrofolate + H(+). It functions in the pathway one-carbon metabolism; tetrahydrofolate interconversion. Functionally, catalyzes the oxidation of 5,10-methylenetetrahydrofolate to 5,10-methenyltetrahydrofolate and then the hydrolysis of 5,10-methenyltetrahydrofolate to 10-formyltetrahydrofolate. The sequence is that of Bifunctional protein FolD from Agrobacterium fabrum (strain C58 / ATCC 33970) (Agrobacterium tumefaciens (strain C58)).